We begin with the raw amino-acid sequence, 188 residues long: MNITATVLLAFGMSMDAFAASIGKGATLHKPKFSEALRTGLIFGAVETLTPLIGWGMGMLASRFVLEWNHWIAFVLLIFLGGRMIIEGIRGGDDEDEEPRRRHGFWLLVTTAIATSLDAMAVGVGLAFLQVNIIATALAIGCATLIMSTLGMMVGRFIGPILGKKAEILGGLVLIGIGVQILWTHFHG.

5 helical membrane passes run 3-23 (ITAT…ASIG), 66-86 (LEWN…RMII), 106-128 (WLLV…GLAF), 143-163 (ATLI…PILG), and 168-188 (ILGG…HFHG).

Belongs to the MntP (TC 9.B.29) family.

It is found in the cell inner membrane. Its function is as follows. Probably functions as a manganese efflux pump. The sequence is that of Probable manganese efflux pump MntP from Escherichia fergusonii (strain ATCC 35469 / DSM 13698 / CCUG 18766 / IAM 14443 / JCM 21226 / LMG 7866 / NBRC 102419 / NCTC 12128 / CDC 0568-73).